Consider the following 256-residue polypeptide: Coiled-coil domain-containing protein 90B, mitochondrial (256 aa).

A mitochondrion-targeting transit peptide spans 1 to 42 (MRSRWIWRFLRPDGGGIRWTSTPHGRLSPALRRGFLTTTTKS). Residues 129-167 (LEKSEFANLRAENEKMKIELDQVKQQLTNETSRIRADNK) are a coiled coil. A helical membrane pass occupies residues 231–253 (TIRYLAASVFTCLAIALGFYRFW).

Belongs to the CCDC90 family. In terms of assembly, interacts with MCU.

It is found in the mitochondrion membrane. This is Coiled-coil domain-containing protein 90B, mitochondrial (Ccdc90b) from Mus musculus (Mouse).